Reading from the N-terminus, the 461-residue chain is 3-isopropylmalate dehydratase large subunit (461 aa).

Residues C338, C398, and C401 each contribute to the [4Fe-4S] cluster site.

The protein belongs to the aconitase/IPM isomerase family. LeuC type 1 subfamily. Heterodimer of LeuC and LeuD. [4Fe-4S] cluster serves as cofactor.

The catalysed reaction is (2R,3S)-3-isopropylmalate = (2S)-2-isopropylmalate. The protein operates within amino-acid biosynthesis; L-leucine biosynthesis; L-leucine from 3-methyl-2-oxobutanoate: step 2/4. Functionally, catalyzes the isomerization between 2-isopropylmalate and 3-isopropylmalate, via the formation of 2-isopropylmaleate. The protein is 3-isopropylmalate dehydratase large subunit of Streptococcus mutans serotype c (strain ATCC 700610 / UA159).